Here is a 223-residue protein sequence, read N- to C-terminus: Killer cell lectin-like receptor subfamily B member 1B allele A (223 aa).

Topologically, residues 1 to 45 (MDTAVVYADLHLARTGEPKREPPPSLSPDTCQCPRWHRLALKLGC) are cytoplasmic. Residues 5–10 (VVYADL) carry the ITIM motif motif. An LCK-binding motif motif is present at residues 31 to 34 (CQCP). Residues 46–66 (ACLILLVLSVIGLGVLVLTLL) form a helical; Signal-anchor for type II membrane protein membrane-spanning segment. At 67–223 (QKPLIQNSPA…LKRESTCNDS (157 aa)) the chain is on the extracellular side. A C-type lectin domain is found at 101–211 (HQDKCFHVSQ…CDSDNIWICQ (111 aa)). Disulfide bonds link cysteine 122–cysteine 210 and cysteine 189–cysteine 202.

As to quaternary structure, homodimer; disulfide-linked. Interacts with tyrosine kinase LCK. Binds PTPN6/SHP-1 in a phosphorylation-dependent manner. Expressed in a subset of natural killer cells.

It is found in the membrane. Functionally, receptor for CLEC2D/OCIL. Ligand-binding contributes to inhibition of cytotoxic natural killer (NK) cells. May mediate MHC class I-independent 'missing-self' recognition of allografts, tumor cells and virus-infected cells. The chain is Killer cell lectin-like receptor subfamily B member 1B allele A from Rattus norvegicus (Rat).